Consider the following 120-residue polypeptide: Autophagy-related protein 8d (120 aa).

Gly117 is lipidated: Phosphatidylethanolamine amidated glycine. Positions 118-120 (IFF) are cleaved as a propeptide — removed in mature form.

It belongs to the ATG8 family. As to quaternary structure, interacts with ATG4B. Interacts with NBR1. Post-translationally, the C-terminal 3 residues are removed by ATG4 to expose Gly-117 at the C-terminus. This Gly-117 forms then a thioester bond with the 'Cys-558' of ATG7 (E1-like activating enzyme) before being transferred to the 'Cys-258' of ATG3 (the specific E2 conjugating enzyme), in order to be finally amidated with phosphatidylethanolamine. This lipid modification anchors ATG8 to autophagosomes. Constitutively expressed.

Its subcellular location is the cytoplasmic vesicle. The protein localises to the autophagosome membrane. The protein resides in the vacuole membrane. It is found in the cytoplasm. It localises to the cytoskeleton. Functionally, ubiquitin-like modifier involved in autophagosomes formation. May mediate the delivery of the autophagosomes to the vacuole via the microtubule cytoskeleton. This Arabidopsis thaliana (Mouse-ear cress) protein is Autophagy-related protein 8d (ATG8D).